We begin with the raw amino-acid sequence, 545 residues long: Glucose starvation modulator protein 1 (545 aa).

The segment at residues 20–48 (CGFCHEKHLQCDVGRPCQNCRKRNIASFC) is a DNA-binding region (zn(2)-C6 fungal-type). The segment covering 51 to 60 (KVKRRRKRKR) has biased composition (basic residues). 2 disordered regions span residues 51–131 (KVKR…AMKD) and 228–270 (YISL…WQQQ). The span at 61–71 (SDASNFDKDEA) shows a compositional bias: basic and acidic residues. The span at 72–92 (ATQTLNFNTVNPGEGSSSAMT) shows a compositional bias: polar residues. The span at 98-110 (TGTTTATTTRTTT) shows a compositional bias: low complexity. Positions 111-125 (NFRSESKASSSTENI) are enriched in polar residues. Positions 257–270 (QQKESQQMQLWQQQ) are enriched in low complexity. In terms of domain architecture, PAS spans 416 to 486 (ELENMSKLVN…DLFHEHLAFG (71 aa)).

The protein belongs to the ERT1/acuK family.

It localises to the nucleus. Functionally, transcription factor which regulates nonfermentable carbon utilization. This Zygosaccharomyces rouxii (strain ATCC 2623 / CBS 732 / NBRC 1130 / NCYC 568 / NRRL Y-229) protein is Glucose starvation modulator protein 1 (GSM1).